The sequence spans 399 residues: Succinate--CoA ligase [ADP-forming] subunit beta (399 aa).

The ATP-grasp domain occupies 9 to 254; it reads KAVLAEFGAP…ESEEDPKEIE (246 aa). Residues Lys46, 53–55, Glu109, Ala112, and Glu117 contribute to the ATP site; that span reads GRG. Mg(2+) is bound by residues Asn209 and Asp223. Substrate contacts are provided by residues Asn274 and 331 to 333; that span reads GIM.

The protein belongs to the succinate/malate CoA ligase beta subunit family. As to quaternary structure, heterotetramer of two alpha and two beta subunits. Mg(2+) serves as cofactor.

The catalysed reaction is succinate + ATP + CoA = succinyl-CoA + ADP + phosphate. It catalyses the reaction GTP + succinate + CoA = succinyl-CoA + GDP + phosphate. The protein operates within carbohydrate metabolism; tricarboxylic acid cycle; succinate from succinyl-CoA (ligase route): step 1/1. Functionally, succinyl-CoA synthetase functions in the citric acid cycle (TCA), coupling the hydrolysis of succinyl-CoA to the synthesis of either ATP or GTP and thus represents the only step of substrate-level phosphorylation in the TCA. The beta subunit provides nucleotide specificity of the enzyme and binds the substrate succinate, while the binding sites for coenzyme A and phosphate are found in the alpha subunit. In Caulobacter vibrioides (strain NA1000 / CB15N) (Caulobacter crescentus), this protein is Succinate--CoA ligase [ADP-forming] subunit beta.